Here is a 215-residue protein sequence, read N- to C-terminus: Cytochrome b6 (215 aa).

A helical membrane pass occupies residues 32–52 (IFYCLGGITFTSFLVQVATGF). Residue Cys-35 coordinates heme c. Residues His-86 and His-100 each contribute to the heme b site. 3 consecutive transmembrane segments (helical) span residues 90 to 110 (ASMM…TGGF), 116 to 136 (LTWV…VTGY), and 186 to 206 (LHTF…FLMI). His-187 and His-202 together coordinate heme b.

The protein belongs to the cytochrome b family. PetB subfamily. The 4 large subunits of the cytochrome b6-f complex are cytochrome b6, subunit IV (17 kDa polypeptide, PetD), cytochrome f and the Rieske protein, while the 4 small subunits are PetG, PetL, PetM and PetN. The complex functions as a dimer. Heme b is required as a cofactor. Heme c serves as cofactor.

It localises to the plastid. The protein resides in the chloroplast thylakoid membrane. Component of the cytochrome b6-f complex, which mediates electron transfer between photosystem II (PSII) and photosystem I (PSI), cyclic electron flow around PSI, and state transitions. The sequence is that of Cytochrome b6 from Oltmannsiellopsis viridis (Marine flagellate).